Here is a 359-residue protein sequence, read N- to C-terminus: tRNA-specific 2-thiouridylase MnmA (359 aa).

Residues 7–14 (GLSGGVDS) and leucine 33 each bind ATP. The Nucleophile role is filled by cysteine 94. Cysteine 94 and cysteine 193 are disulfide-bonded. Glycine 119 lines the ATP pocket. An interaction with tRNA region spans residues 143 to 145 (KDQ). The active-site Cysteine persulfide intermediate is cysteine 193. The tract at residues 298–299 (RY) is interaction with tRNA.

It belongs to the MnmA/TRMU family.

It localises to the cytoplasm. The enzyme catalyses S-sulfanyl-L-cysteinyl-[protein] + uridine(34) in tRNA + AH2 + ATP = 2-thiouridine(34) in tRNA + L-cysteinyl-[protein] + A + AMP + diphosphate + H(+). In terms of biological role, catalyzes the 2-thiolation of uridine at the wobble position (U34) of tRNA, leading to the formation of s(2)U34. The protein is tRNA-specific 2-thiouridylase MnmA of Trichodesmium erythraeum (strain IMS101).